The primary structure comprises 329 residues: GTP 3',8-cyclase (329 aa).

In terms of domain architecture, Radical SAM core spans 8–234 (AFARKFYYLR…QLRQRSDGPA (227 aa)). R17 contributes to the GTP binding site. [4Fe-4S] cluster contacts are provided by C24 and C28. An S-adenosyl-L-methionine-binding site is contributed by Y30. C31 provides a ligand contact to [4Fe-4S] cluster. Residue R68 participates in GTP binding. Residue G72 coordinates S-adenosyl-L-methionine. T99 serves as a coordination point for GTP. S123 provides a ligand contact to S-adenosyl-L-methionine. A GTP-binding site is contributed by K160. M194 contributes to the S-adenosyl-L-methionine binding site. C257 and C260 together coordinate [4Fe-4S] cluster. 262–264 (RLR) contacts GTP. Position 274 (C274) interacts with [4Fe-4S] cluster.

Belongs to the radical SAM superfamily. MoaA family. As to quaternary structure, monomer and homodimer. [4Fe-4S] cluster serves as cofactor.

It carries out the reaction GTP + AH2 + S-adenosyl-L-methionine = (8S)-3',8-cyclo-7,8-dihydroguanosine 5'-triphosphate + 5'-deoxyadenosine + L-methionine + A + H(+). It participates in cofactor biosynthesis; molybdopterin biosynthesis. Functionally, catalyzes the cyclization of GTP to (8S)-3',8-cyclo-7,8-dihydroguanosine 5'-triphosphate. The polypeptide is GTP 3',8-cyclase (Salmonella paratyphi B (strain ATCC BAA-1250 / SPB7)).